A 485-amino-acid polypeptide reads, in one-letter code: Malonate-semialdehyde dehydrogenase (485 aa).

NAD(+) is bound by residues Phe155, Lys179, Glu182, Arg183, and Ser232. Cys287 serves as the catalytic Nucleophile. Glu386 contacts NAD(+).

This sequence belongs to the aldehyde dehydrogenase family. IolA subfamily. Homotetramer.

The catalysed reaction is 3-oxopropanoate + NAD(+) + CoA + H2O = hydrogencarbonate + acetyl-CoA + NADH + H(+). The enzyme catalyses 2-methyl-3-oxopropanoate + NAD(+) + CoA + H2O = propanoyl-CoA + hydrogencarbonate + NADH + H(+). It functions in the pathway polyol metabolism; myo-inositol degradation into acetyl-CoA; acetyl-CoA from myo-inositol: step 7/7. In terms of biological role, catalyzes the oxidation of malonate semialdehyde (MSA) and methylmalonate semialdehyde (MMSA) into acetyl-CoA and propanoyl-CoA, respectively. Is involved in a myo-inositol catabolic pathway. Bicarbonate, and not CO2, is the end-product of the enzymatic reaction. The sequence is that of Malonate-semialdehyde dehydrogenase from Halalkalibacterium halodurans (strain ATCC BAA-125 / DSM 18197 / FERM 7344 / JCM 9153 / C-125) (Bacillus halodurans).